The primary structure comprises 119 residues: Large ribosomal subunit protein bL20 (119 aa).

It belongs to the bacterial ribosomal protein bL20 family.

Binds directly to 23S ribosomal RNA and is necessary for the in vitro assembly process of the 50S ribosomal subunit. It is not involved in the protein synthesizing functions of that subunit. In Stenotrophomonas maltophilia (strain K279a), this protein is Large ribosomal subunit protein bL20.